We begin with the raw amino-acid sequence, 886 residues long: Alanine--tRNA ligase (886 aa).

4 residues coordinate Zn(2+): histidine 568, histidine 572, cysteine 670, and histidine 674.

The protein belongs to the class-II aminoacyl-tRNA synthetase family. It depends on Zn(2+) as a cofactor.

Its subcellular location is the cytoplasm. The enzyme catalyses tRNA(Ala) + L-alanine + ATP = L-alanyl-tRNA(Ala) + AMP + diphosphate. In terms of biological role, catalyzes the attachment of alanine to tRNA(Ala) in a two-step reaction: alanine is first activated by ATP to form Ala-AMP and then transferred to the acceptor end of tRNA(Ala). Also edits incorrectly charged Ser-tRNA(Ala) and Gly-tRNA(Ala) via its editing domain. This is Alanine--tRNA ligase from Prochlorococcus marinus (strain NATL2A).